The chain runs to 729 residues: Sodium-dependent neutral amino acid transporter B(0)AT2 (729 aa).

The Cytoplasmic portion of the chain corresponds to 1–69 (MPKNSKVVKR…ERPAWNSKLQ (69 aa)). Ser-25 and Ser-55 each carry phosphoserine. A run of 3 helical transmembrane segments spans residues 70–90 (YILA…FPYL), 98–117 (AYLL…LFFL), and 142–162 (GIGF…NVII). The Extracellular portion of the chain corresponds to 163–225 (GWTLFYFSQS…SSISESGGLN (63 aa)). Asn-187 carries N-linked (GlcNAc...) asparagine glycosylation. 4 consecutive transmembrane segments (helical) span residues 226–244 (WKMT…LAMI), 253–270 (IMYF…CFLI), 306–323 (VFFA…FSSY), and 335–356 (VLVS…FAVL). Residues 357-452 (GFKANIVNEK…FIAFTEAMTH (96 aa)) lie on the Extracellular side of the membrane. Residues Asn-383 and Asn-394 are each glycosylated (N-linked (GlcNAc...) asparagine). 5 consecutive transmembrane segments (helical) span residues 453-472 (FPAS…NLGL), 496-514 (ILTV…MFVQ), 530-550 (TLPL…VYGI), 571-592 (YMWK…IVNM), and 620-642 (VVCF…IRRC). Residues 643 to 729 (NLIDDSSGNL…DMPDMPESDL (87 aa)) lie on the Cytoplasmic side of the membrane. A phosphoserine mark is found at Ser-687, Ser-699, and Ser-701.

It belongs to the sodium:neurotransmitter symporter (SNF) (TC 2.A.22) family. SLC6A15 subfamily. As to expression, widely distributed in the central nervous system, including the olfactory bulb, the hypothalamus, the cerebral cortex, the hippocampus, and the cerebellum. In addition, intense expression is found in the motor nuclei including the oculomotor nucleus, abducens nucleus, trigeminal motor nucleus, facial nucleus, hypoglossal nucleus and ventral horn of spinal cord. Intense hybridization signals are also observed in the nuclei containing monoaminergic neurons, such as locus coeruleus, the substantia nigra pars compacta, the ventral tegmental area, the dorsal raphe nucleus and the median raphe nucleus.

The protein localises to the membrane. It catalyses the reaction L-leucine(in) + Na(+)(in) = L-leucine(out) + Na(+)(out). It carries out the reaction L-isoleucine(in) + Na(+)(in) = L-isoleucine(out) + Na(+)(out). The catalysed reaction is L-methionine(in) + Na(+)(in) = L-methionine(out) + Na(+)(out). The enzyme catalyses L-proline(in) + Na(+)(in) = L-proline(out) + Na(+)(out). It catalyses the reaction L-alanine(in) + Na(+)(in) = L-alanine(out) + Na(+)(out). It carries out the reaction L-asparagine(in) + Na(+)(in) = L-asparagine(out) + Na(+)(out). The catalysed reaction is L-valine(in) + Na(+)(in) = L-valine(out) + Na(+)(out). The enzyme catalyses L-cysteine(in) + Na(+)(in) = L-cysteine(out) + Na(+)(out). It catalyses the reaction L-glutamine(in) + Na(+)(in) = L-glutamine(out) + Na(+)(out). It carries out the reaction L-serine(in) + Na(+)(in) = L-serine(out) + Na(+)(out). The catalysed reaction is L-threonine(in) + Na(+)(in) = L-threonine(out) + Na(+)(out). The enzyme catalyses L-pipecolate(in) + Na(+)(in) = L-pipecolate(out) + Na(+)(out). It catalyses the reaction L-phenylalanine(in) + Na(+)(in) = L-phenylalanine(out) + Na(+)(out). In terms of biological role, functions as a sodium-dependent neutral amino acid transporter. Exhibits preference for the branched-chain amino acids, particularly leucine, valine and isoleucine and methionine. Can also transport low-affinity substrates such as alanine, phenylalanine, glutamine and pipecolic acid. Mediates the saturable, pH-sensitive and electrogenic cotransport of proline and sodium ions with a stoichiometry of 1:1. May have a role as transporter for neurotransmitter precursors into neurons. In contrast to other members of the neurotransmitter transporter family, does not appear to be chloride-dependent. The protein is Sodium-dependent neutral amino acid transporter B(0)AT2 (Slc6a15) of Rattus norvegicus (Rat).